A 185-amino-acid polypeptide reads, in one-letter code: Peptidyl-tRNA hydrolase (185 aa).

Residue Tyr-14 participates in tRNA binding. Residue His-19 is the Proton acceptor of the active site. TRNA is bound by residues Tyr-65, Asn-67, and Asn-113.

The protein belongs to the PTH family. In terms of assembly, monomer.

The protein localises to the cytoplasm. It carries out the reaction an N-acyl-L-alpha-aminoacyl-tRNA + H2O = an N-acyl-L-amino acid + a tRNA + H(+). In terms of biological role, hydrolyzes ribosome-free peptidyl-tRNAs (with 1 or more amino acids incorporated), which drop off the ribosome during protein synthesis, or as a result of ribosome stalling. Functionally, catalyzes the release of premature peptidyl moieties from peptidyl-tRNA molecules trapped in stalled 50S ribosomal subunits, and thus maintains levels of free tRNAs and 50S ribosomes. This chain is Peptidyl-tRNA hydrolase, found in Rickettsia bellii (strain OSU 85-389).